A 301-amino-acid chain; its full sequence is Immediate early response gene 5-like protein (301 aa).

This sequence belongs to the IER family.

The polypeptide is Immediate early response gene 5-like protein (ier5l) (Danio rerio (Zebrafish)).